We begin with the raw amino-acid sequence, 1435 residues long: DNA polymerase III PolC-type (1435 aa).

The 157-residue stretch at 420-576 folds into the Exonuclease domain; that stretch reads YVVFDVETTG…YDTEATAYIF (157 aa).

Belongs to the DNA polymerase type-C family. PolC subfamily.

The protein resides in the cytoplasm. It catalyses the reaction DNA(n) + a 2'-deoxyribonucleoside 5'-triphosphate = DNA(n+1) + diphosphate. In terms of biological role, required for replicative DNA synthesis. This DNA polymerase also exhibits 3' to 5' exonuclease activity. The sequence is that of DNA polymerase III PolC-type from Staphylococcus aureus.